Consider the following 30-residue polypeptide: NVDFNSESTRRKKKQKEIVDLHNXLRRXVD.

This sequence belongs to the CRISP family. Post-translationally, contains 8 disulfide bonds. As to expression, expressed by the venom gland.

It localises to the secreted. Inhibits calcium-activated potassium channels (KCa), voltage-gated potassium channel (Kv), and the calcium release channel/ryanodine receptor (RyR). This Naja annulifera (Banded Egyptian cobra) protein is Cysteine-rich venom protein annuliferin-a.